The following is a 405-amino-acid chain: Argininosuccinate synthase (405 aa).

9-17 contributes to the ATP binding site; that stretch reads AYSGGLDTS. L-citrulline-binding residues include Tyr87 and Ser92. Residue Gly117 participates in ATP binding. Positions 119, 123, and 124 each coordinate L-aspartate. Residue Asn123 participates in L-citrulline binding. Positions 127, 176, 185, 262, and 274 each coordinate L-citrulline.

Belongs to the argininosuccinate synthase family. Type 1 subfamily. Homotetramer.

Its subcellular location is the cytoplasm. It carries out the reaction L-citrulline + L-aspartate + ATP = 2-(N(omega)-L-arginino)succinate + AMP + diphosphate + H(+). The protein operates within amino-acid biosynthesis; L-arginine biosynthesis; L-arginine from L-ornithine and carbamoyl phosphate: step 2/3. This Caldicellulosiruptor saccharolyticus (strain ATCC 43494 / DSM 8903 / Tp8T 6331) protein is Argininosuccinate synthase.